The following is a 1262-amino-acid chain: Collagen alpha-1(III) chain (1262 aa).

Positions 1–23 are cleaved as a signal peptide; the sequence is MMSFVQKVSLFILAVFQPSVILA. Residues 24 to 150 constitute a propeptide, N-terminal propeptide; it reads QQDALGGCTH…PSISGGSFSP (127 aa). The region spanning 29–88 is the VWFC domain; that stretch reads GGCTHLGQEYADRDVWKPEPCQICVCDSGSVLCDDIICDDQELDCPNPEIPLGECCPVCP. 2 disordered regions span residues 95–143 and 160–1000; these read TELP…CPSI and GSVG…GGVA. Over residues 102-118 the composition is skewed to low complexity; that stretch reads GPKGDPGSPGSPGRTGA. Pro residues predominate over residues 119–134; it reads PGPPGQPGSPGAPGPP. The tract at residues 145 to 164 is nonhelical region (N-terminal); that stretch reads GGSFSPQYDSYDVKAGSVGM. The segment at 165–994 is triple-helical region; it reads GYPPQPISGF…PGPSGPPGPC (830 aa). Positions 167 to 190 are enriched in pro residues; the sequence is PPQPISGFPGPPGPSGPPGPPGHA. Positions 192–201 are enriched in low complexity; it reads PPGSNGYQGP. The span at 202 to 216 shows a compositional bias: pro residues; sequence PGEPGQPGPSGPPGP. Residues 228–240 are compositionally biased toward basic and acidic residues; that stretch reads KDGEPGRPGRNGD. Low complexity predominate over residues 253–264; sequence PGMPGMPGMKGA. At K262 the chain carries 5-hydroxylysine. The span at 265-274 shows a compositional bias: basic and acidic residues; it reads RGFDGKDGAK. Low complexity-rich tracts occupy residues 276 to 295 and 339 to 376; these read DSGAPGPKGEAGQPGANGSP and TAGFPGSPGFKGEAGPPGPAGASGNPGERGEPGPQGQA. Position 283 is a 5-hydroxylysine (K283). Residues 389–414 are compositionally biased toward gly residues; it reads GSPGGKGEMGPSGIPGGPGPPGGRGL. Composition is skewed to low complexity over residues 534–549 and 631–640; these read MRGLPGIPGSPGSDGK and PGPSGSPGLQ. Over residues 641-650 the composition is skewed to gly residues; that stretch reads GLPGGPGPAG. A compositionally biased stretch (low complexity) spans 672 to 684; the sequence is PKGENGIPGERGP. Positions 692–701 are enriched in gly residues; sequence GARGGPGPAG. 4 stretches are compositionally biased toward low complexity: residues 723–738, 781–790, 802–817, and 828–838; these read LQGMPGERGASGSPGP, TGPAGAPGPA, QGLPGPAGFPGAPGQN, and PPGLRGEAGPP. K859 is subject to 5-hydroxylysine. Residues 863-872 show a composition bias toward gly residues; it reads GSPGGPGAAG. Over residues 895-904 the composition is skewed to pro residues; that stretch reads PGVPGPPGHP. The segment covering 927 to 940 has biased composition (low complexity); that stretch reads PQGAIGSPGASGAR. A compositionally biased stretch (pro residues) spans 976–993; sequence AGPPGQPGLPGPSGPPGP. The segment at 995 to 1003 is nonhelical region (C-terminal); it reads CGGGVASLG. Positions 1018 to 1262 are cleaved as a propeptide — C-terminal propeptide; it reads DEPKENEINL…GVDVGPVCFL (245 aa). The Fibrillar collagen NC1 domain occupies 1028–1262; it reads GEIMSSMKSI…GVDVGPVCFL (235 aa). 3 disulfides stabilise this stretch: C1058–C1090, C1098–C1260, and C1168–C1213. Ca(2+) is bound by residues D1076, N1078, Q1079, C1081, and D1084. N1163 is a glycosylation site (N-linked (GlcNAc...) asparagine).

It belongs to the fibrillar collagen family. In terms of assembly, trimers of identical alpha 1(III) chains. The chains are linked to each other by interchain disulfide bonds. Trimers are also cross-linked via hydroxylysines. Prolines at the third position of the tripeptide repeating unit (G-X-Y) are hydroxylated in some or all of the chains.

Its subcellular location is the secreted. It localises to the extracellular space. It is found in the extracellular matrix. Its function is as follows. Collagen type III occurs in most soft connective tissues along with type I collagen. The chain is Collagen alpha-1(III) chain (COL3A1) from Gallus gallus (Chicken).